Here is a 365-residue protein sequence, read N- to C-terminus: MISTTSKRKIEHLKLCAESPVESRKVSAGFEDVTLIHRALPELDMDKLNLSIDFLGKRLQAPFLIASITGGHPDTTPVNAALAAAAEELGIGMGVGSQRAAIDDPTQEESFRVVREKAPTAFIYGNVGAAQIRQYGVDGVEKLIEMIDADALAIHLNFLQEAIQPEGDRDATGCLDMIKEICSVLGKPVIIKETGAGISREDSILLQKAGVSAIDVGGAGGTSWAGVEVYRARKSGDYASEHLGELFWDFGIPTVASIIESRVSLPIIATGGIRTGIDIAKSIALGASAASAALPFVGPALEGKESVVRVLSRMLDEFRIAMFLCGCANIQDLRNAPVVVTGWTLEYLGQRGFNVKDYAIAGDSF.

A substrate-binding site is contributed by 8–9; the sequence is RK. FMN contacts are provided by residues 67-69, Ser97, and Asn126; that span reads SIT. 97 to 99 is a binding site for substrate; sequence SQR. Gln160 is a binding site for substrate. Glu161 contacts Mg(2+). FMN contacts are provided by residues Lys192, Thr222, 272-274, and 293-294; these read GIR and AL.

Belongs to the IPP isomerase type 2 family. As to quaternary structure, homooctamer. Dimer of tetramers. FMN is required as a cofactor. Requires NADPH as cofactor. Mg(2+) serves as cofactor.

The protein localises to the cytoplasm. The catalysed reaction is isopentenyl diphosphate = dimethylallyl diphosphate. Its function is as follows. Involved in the biosynthesis of isoprenoids. Catalyzes the 1,3-allylic rearrangement of the homoallylic substrate isopentenyl (IPP) to its allylic isomer, dimethylallyl diphosphate (DMAPP). This is Isopentenyl-diphosphate delta-isomerase from Methanosarcina barkeri (strain Fusaro / DSM 804).